The following is a 985-amino-acid chain: Ras and Rab interactor 3 (985 aa).

The segment at methionine 1–glutamate 24 is disordered. The SH2 domain maps to tryptophan 63–glutamine 158. Disordered regions lie at residues serine 183 to proline 202, glutamine 251 to serine 293, and proline 315 to leucine 531. Basic and acidic residues predominate over residues glutamate 189–alanine 201. Composition is skewed to pro residues over residues arginine 278–proline 288 and proline 315–proline 336. Residues aspartate 424 to aspartate 442 show a composition bias toward basic and acidic residues. Positions phenylalanine 587–serine 732 are interaction with RAB5B. The region spanning histidine 703–threonine 846 is the VPS9 domain. The region spanning glutamine 877 to leucine 963 is the Ras-associating domain.

The protein belongs to the RIN (Ras interaction/interference) family. In terms of assembly, interacts with CD2AP, RAB5B, RAB31 and BIN1. As to expression, widely expressed.

The protein localises to the cytoplasm. It is found in the cytoplasmic vesicle. Its subcellular location is the early endosome. Its function is as follows. Ras effector protein that functions as a guanine nucleotide exchange (GEF) for RAB5B and RAB31, by exchanging bound GDP for free GTP. Required for normal RAB31 function. The polypeptide is Ras and Rab interactor 3 (RIN3) (Homo sapiens (Human)).